The following is a 244-amino-acid chain: 5'-nucleotidase SurE (244 aa).

D8, D9, S39, and N96 together coordinate a divalent metal cation.

This sequence belongs to the SurE nucleotidase family. The cofactor is a divalent metal cation.

The protein localises to the cytoplasm. It catalyses the reaction a ribonucleoside 5'-phosphate + H2O = a ribonucleoside + phosphate. Functionally, nucleotidase that shows phosphatase activity on nucleoside 5'-monophosphates. The chain is 5'-nucleotidase SurE from Thermus thermophilus (strain ATCC 27634 / DSM 579 / HB8).